The chain runs to 222 residues: Probable nicotinate-nucleotide adenylyltransferase (222 aa).

The protein belongs to the NadD family.

It catalyses the reaction nicotinate beta-D-ribonucleotide + ATP + H(+) = deamido-NAD(+) + diphosphate. Its pathway is cofactor biosynthesis; NAD(+) biosynthesis; deamido-NAD(+) from nicotinate D-ribonucleotide: step 1/1. Functionally, catalyzes the reversible adenylation of nicotinate mononucleotide (NaMN) to nicotinic acid adenine dinucleotide (NaAD). In Xylella fastidiosa (strain M23), this protein is Probable nicotinate-nucleotide adenylyltransferase.